Reading from the N-terminus, the 190-residue chain is Female-specific histamine-binding protein 1 (190 aa).

The N-terminal stretch at 1 to 18 (MKLLLSLAFVLALSQVKA) is a signal peptide. Tyr54, Asp57, Trp60, Glu100, Tyr118, Glu153, and Trp155 together coordinate histamine. 2 disulfide bridges follow: Cys66-Cys187 and Cys137-Cys166.

The protein belongs to the calycin superfamily. Histamine-binding salivary protein family. As to quaternary structure, monomer. As to expression, expressed in salivary glands.

The protein localises to the secreted. In terms of biological role, salivary tick protein that acts by scavenging histamine at the wound site, outcompeting histamine receptors for histamine, thereby overcoming host inflammatory responses. Binds histamine with a high-affinity (Kd=18 nM). Contains two binding histamine sites (H and L), that appear to bind histamine with differing affinities (high and low). In vivo, when tested on a mouse asthma model, shows a profound inhibitory effect on allergic asthma. Aerosol administration of this protein prevents airway hyperreactivity and abrogates peribronchial inflammation, eosinophil recruitment, mucus hypersecretion, and interleukins (IL-4 and IL-5) secretion. In addition, when tested on a mouse model of acute respiratory distress syndrome (ARDS), it attenuates endotoxin-induced acute lung injury. In Rhipicephalus appendiculatus (Brown ear tick), this protein is Female-specific histamine-binding protein 1.